A 149-amino-acid chain; its full sequence is Ribonuclease H (149 aa).

Positions 4–145 (QRGVVEAFTD…ADALANQGID (142 aa)) constitute an RNase H type-1 domain. Mg(2+) contacts are provided by Asp13, Glu51, Asp73, and Asp137.

It belongs to the RNase H family. In terms of assembly, monomer. Requires Mg(2+) as cofactor.

It is found in the cytoplasm. The enzyme catalyses Endonucleolytic cleavage to 5'-phosphomonoester.. Endonuclease that specifically degrades the RNA of RNA-DNA hybrids. This chain is Ribonuclease H, found in Halorhodospira halophila (strain DSM 244 / SL1) (Ectothiorhodospira halophila (strain DSM 244 / SL1)).